Consider the following 201-residue polypeptide: Recombination protein RecR (201 aa).

Residues 57 to 72 form a C4-type zinc finger; the sequence is CADCRTFTEQEVCNIC. Residues 81-176 form the Toprim domain; that stretch reads GQICVVESPA…EASRIAHGVP (96 aa).

It belongs to the RecR family.

Its function is as follows. May play a role in DNA repair. It seems to be involved in an RecBC-independent recombinational process of DNA repair. It may act with RecF and RecO. This chain is Recombination protein RecR, found in Shigella boydii serotype 18 (strain CDC 3083-94 / BS512).